The sequence spans 577 residues: Arginine--tRNA ligase (577 aa).

A 'HIGH' region motif is present at residues 122–132 (PNVAKEMHVGH).

This sequence belongs to the class-I aminoacyl-tRNA synthetase family. As to quaternary structure, monomer.

The protein resides in the cytoplasm. It carries out the reaction tRNA(Arg) + L-arginine + ATP = L-arginyl-tRNA(Arg) + AMP + diphosphate. This chain is Arginine--tRNA ligase, found in Escherichia coli (strain ATCC 8739 / DSM 1576 / NBRC 3972 / NCIMB 8545 / WDCM 00012 / Crooks).